Consider the following 608-residue polypeptide: Amino-acid acetyltransferase, mitochondrial (608 aa).

The 203-residue stretch at 402–604 (LNLITEHEKG…DICTRIEPSL (203 aa)) folds into the N-acetyltransferase domain.

The protein belongs to the acetyltransferase family.

The protein resides in the mitochondrion. It carries out the reaction L-glutamate + acetyl-CoA = N-acetyl-L-glutamate + CoA + H(+). The protein operates within amino-acid biosynthesis; L-arginine biosynthesis; N(2)-acetyl-L-ornithine from L-glutamate: step 1/4. In terms of biological role, N-acetylglutamate synthase involved in arginine biosynthesis. The polypeptide is Amino-acid acetyltransferase, mitochondrial (ARG2) (Yarrowia lipolytica (strain CLIB 122 / E 150) (Yeast)).